Reading from the N-terminus, the 195-residue chain is Probable GTP-binding protein EngB (195 aa).

The region spanning 24 to 195 (ELPEIALAGR…EAWDAILEKL (172 aa)) is the EngB-type G domain. GTP contacts are provided by residues 32–39 (GRSNVGKS), 59–63 (GKTQL), 77–80 (DVPG), 144–147 (TKAD), and 176–178 (FSS). Positions 39 and 61 each coordinate Mg(2+).

Belongs to the TRAFAC class TrmE-Era-EngA-EngB-Septin-like GTPase superfamily. EngB GTPase family. Mg(2+) is required as a cofactor.

Its function is as follows. Necessary for normal cell division and for the maintenance of normal septation. This Streptococcus pneumoniae (strain Hungary19A-6) protein is Probable GTP-binding protein EngB.